Reading from the N-terminus, the 404-residue chain is Cysteine desulfurase IscS (404 aa).

Pyridoxal 5'-phosphate-binding positions include 75 to 76 (AT), asparagine 155, glutamine 183, and 203 to 205 (SGH). The residue at position 206 (lysine 206) is an N6-(pyridoxal phosphate)lysine. Residue threonine 243 coordinates pyridoxal 5'-phosphate. Cysteine 328 acts as the Cysteine persulfide intermediate in catalysis. A [2Fe-2S] cluster-binding site is contributed by cysteine 328.

The protein belongs to the class-V pyridoxal-phosphate-dependent aminotransferase family. NifS/IscS subfamily. In terms of assembly, homodimer. Forms a heterotetramer with IscU, interacts with other sulfur acceptors. It depends on pyridoxal 5'-phosphate as a cofactor.

Its subcellular location is the cytoplasm. The enzyme catalyses (sulfur carrier)-H + L-cysteine = (sulfur carrier)-SH + L-alanine. The protein operates within cofactor biosynthesis; iron-sulfur cluster biosynthesis. Functionally, master enzyme that delivers sulfur to a number of partners involved in Fe-S cluster assembly, tRNA modification or cofactor biosynthesis. Catalyzes the removal of elemental sulfur atoms from cysteine to produce alanine. Functions as a sulfur delivery protein for Fe-S cluster synthesis onto IscU, an Fe-S scaffold assembly protein, as well as other S acceptor proteins. The chain is Cysteine desulfurase IscS from Shewanella denitrificans (strain OS217 / ATCC BAA-1090 / DSM 15013).